The chain runs to 808 residues: Glycerol-3-phosphate acyltransferase (808 aa).

Residues 306-311 (HRSHMD) carry the HXXXXD motif motif.

This sequence belongs to the GPAT/DAPAT family.

It localises to the cell inner membrane. The catalysed reaction is sn-glycerol 3-phosphate + an acyl-CoA = a 1-acyl-sn-glycero-3-phosphate + CoA. It participates in phospholipid metabolism; CDP-diacylglycerol biosynthesis; CDP-diacylglycerol from sn-glycerol 3-phosphate: step 1/3. This Vibrio parahaemolyticus serotype O3:K6 (strain RIMD 2210633) protein is Glycerol-3-phosphate acyltransferase.